The chain runs to 95 residues: Pyrimidine/purine nucleoside phosphorylase (95 aa).

The protein belongs to the nucleoside phosphorylase PpnP family.

It carries out the reaction a purine D-ribonucleoside + phosphate = a purine nucleobase + alpha-D-ribose 1-phosphate. The enzyme catalyses adenosine + phosphate = alpha-D-ribose 1-phosphate + adenine. The catalysed reaction is cytidine + phosphate = cytosine + alpha-D-ribose 1-phosphate. It catalyses the reaction guanosine + phosphate = alpha-D-ribose 1-phosphate + guanine. It carries out the reaction inosine + phosphate = alpha-D-ribose 1-phosphate + hypoxanthine. The enzyme catalyses thymidine + phosphate = 2-deoxy-alpha-D-ribose 1-phosphate + thymine. The catalysed reaction is uridine + phosphate = alpha-D-ribose 1-phosphate + uracil. It catalyses the reaction xanthosine + phosphate = alpha-D-ribose 1-phosphate + xanthine. In terms of biological role, catalyzes the phosphorolysis of diverse nucleosides, yielding D-ribose 1-phosphate and the respective free bases. Can use uridine, adenosine, guanosine, cytidine, thymidine, inosine and xanthosine as substrates. Also catalyzes the reverse reactions. The sequence is that of Pyrimidine/purine nucleoside phosphorylase from Vibrio cholerae serotype O1 (strain ATCC 39315 / El Tor Inaba N16961).